The chain runs to 255 residues: tRNA1(Val) (adenine(37)-N6)-methyltransferase (255 aa).

It belongs to the methyltransferase superfamily. tRNA (adenine-N(6)-)-methyltransferase family.

It localises to the cytoplasm. The catalysed reaction is adenosine(37) in tRNA1(Val) + S-adenosyl-L-methionine = N(6)-methyladenosine(37) in tRNA1(Val) + S-adenosyl-L-homocysteine + H(+). Specifically methylates the adenine in position 37 of tRNA(1)(Val) (anticodon cmo5UAC). This Porphyromonas gingivalis (strain ATCC 33277 / DSM 20709 / CIP 103683 / JCM 12257 / NCTC 11834 / 2561) protein is tRNA1(Val) (adenine(37)-N6)-methyltransferase.